A 235-amino-acid polypeptide reads, in one-letter code: Protein FAM3B (235 aa).

Residues 1–29 (MRPLAGGLLKVVFVVFASLCAWYSGYLLA) form the signal peptide. Cystine bridges form between Cys63-Cys91 and Cys69-Cys229. Residues 72-233 (DTYAYRLLSG…IQIEGCIPKE (162 aa)) enclose the GG-type lectin domain. 2 N-linked (GlcNAc...) asparagine glycosylation sites follow: Asn120 and Asn208.

Belongs to the FAM3 family. Post-translationally, 2 N-termini have been observed in the mature protein: the first at Glu-30, resulting from signal peptide cleavage, the second at Ser-46. O-glycosylated. As to expression, highly expressed in the pancreas. Also found in the colon, kidney, prostate, small intestine and testis.

It localises to the secreted. Its function is as follows. Induces apoptosis of alpha and beta cells in a dose- and time-dependent manner. This Homo sapiens (Human) protein is Protein FAM3B (FAM3B).